Reading from the N-terminus, the 291-residue chain is METPGLVVHGEAAPFSTALRSLVNNPLYSDVRFVVGQERQEVFAHRCLLACRCNFFQRLLSSEPGPGVPSPVVLSTVPAEAFLAVLEFLYTNSAKLQRHSVLEVLTAAVEYGLEELRELCLEFVVKALDVELVCEALQVAVTFGLGQLQERCVAFIEAHSQETLRTRGFLELSAPALLPLLRSDKLCVDEAELVLAARSWARVGAAVLERPVAEVAAPVVRELRLALLAPAELSALEEQNRREPLIPVEQIVEAWKCHALRRGDAARGTPCRRRRGTLPREHHRFLDLPFK.

In terms of domain architecture, BTB spans 29 to 98; sequence SDVRFVVGQE…LYTNSAKLQR (70 aa). The region spanning 134–234 is the BACK domain; that stretch reads CEALQVAVTF…LALLAPAELS (101 aa).

In Bos taurus (Bovine), this protein is BTB/POZ domain-containing protein 19 (BTBD19).